A 72-amino-acid chain; its full sequence is SRY-related protein ADW2 (72 aa).

Positions 1–69 (VKRPMNAFMV…KHMADYADYK (69 aa)) form a DNA-binding region, HMG box.

Its subcellular location is the nucleus. This chain is SRY-related protein ADW2, found in Alligator mississippiensis (American alligator).